The sequence spans 444 residues: 3-phosphoshikimate 1-carboxyvinyltransferase (444 aa).

3 residues coordinate 3-phosphoshikimate: Lys24, Ser25, and Arg29. Lys24 provides a ligand contact to phosphoenolpyruvate. Gly97 and Arg125 together coordinate phosphoenolpyruvate. 3-phosphoshikimate is bound by residues Ser170, Gln172, Asp318, and Lys345. A phosphoenolpyruvate-binding site is contributed by Gln172. The Proton acceptor role is filled by Asp318. Arg349 and Arg391 together coordinate phosphoenolpyruvate.

This sequence belongs to the EPSP synthase family. Monomer.

The protein resides in the cytoplasm. The catalysed reaction is 3-phosphoshikimate + phosphoenolpyruvate = 5-O-(1-carboxyvinyl)-3-phosphoshikimate + phosphate. It participates in metabolic intermediate biosynthesis; chorismate biosynthesis; chorismate from D-erythrose 4-phosphate and phosphoenolpyruvate: step 6/7. Its function is as follows. Catalyzes the transfer of the enolpyruvyl moiety of phosphoenolpyruvate (PEP) to the 5-hydroxyl of shikimate-3-phosphate (S3P) to produce enolpyruvyl shikimate-3-phosphate and inorganic phosphate. The sequence is that of 3-phosphoshikimate 1-carboxyvinyltransferase from Halorhodospira halophila (strain DSM 244 / SL1) (Ectothiorhodospira halophila (strain DSM 244 / SL1)).